The chain runs to 323 residues: Quinolinate synthase (323 aa).

Positions 39 and 56 each coordinate iminosuccinate. Cysteine 101 contacts [4Fe-4S] cluster. Iminosuccinate-binding positions include 127 to 129 (YIN) and serine 144. Position 187 (cysteine 187) interacts with [4Fe-4S] cluster. Residues 213-215 (HPE) and threonine 230 contribute to the iminosuccinate site. Cysteine 280 is a binding site for [4Fe-4S] cluster.

The protein belongs to the quinolinate synthase family. Type 2 subfamily. The cofactor is [4Fe-4S] cluster.

It is found in the cytoplasm. It catalyses the reaction iminosuccinate + dihydroxyacetone phosphate = quinolinate + phosphate + 2 H2O + H(+). It participates in cofactor biosynthesis; NAD(+) biosynthesis; quinolinate from iminoaspartate: step 1/1. Functionally, catalyzes the condensation of iminoaspartate with dihydroxyacetone phosphate to form quinolinate. This is Quinolinate synthase from Chlorobium phaeobacteroides (strain DSM 266 / SMG 266 / 2430).